The sequence spans 1444 residues: DNA polymerase III PolC-type (1444 aa).

The Exonuclease domain occupies 428–584 (YCVFDVETTG…FDAEATAYLA (157 aa)).

It belongs to the DNA polymerase type-C family. PolC subfamily.

It is found in the cytoplasm. The enzyme catalyses DNA(n) + a 2'-deoxyribonucleoside 5'-triphosphate = DNA(n+1) + diphosphate. Required for replicative DNA synthesis. This DNA polymerase also exhibits 3' to 5' exonuclease activity. This chain is DNA polymerase III PolC-type, found in Listeria innocua serovar 6a (strain ATCC BAA-680 / CLIP 11262).